Consider the following 230-residue polypeptide: Ribosomal RNA small subunit methyltransferase G (230 aa).

S-adenosyl-L-methionine contacts are provided by residues glycine 80, phenylalanine 85, 131-132 (VE), and arginine 145.

The protein belongs to the methyltransferase superfamily. RNA methyltransferase RsmG family.

Its subcellular location is the cytoplasm. The catalysed reaction is guanosine(527) in 16S rRNA + S-adenosyl-L-methionine = N(7)-methylguanosine(527) in 16S rRNA + S-adenosyl-L-homocysteine. Its function is as follows. Specifically methylates the N7 position of guanine in position 527 of 16S rRNA. In Novosphingobium aromaticivorans (strain ATCC 700278 / DSM 12444 / CCUG 56034 / CIP 105152 / NBRC 16084 / F199), this protein is Ribosomal RNA small subunit methyltransferase G.